A 609-amino-acid polypeptide reads, in one-letter code: Zinc metalloproteinase-disintegrin-like (609 aa).

A signal peptide spans 1–20; it reads MIQVLLVTICLAALPYQGSS. A propeptide spanning residues 21–189 is cleaved from the precursor; the sequence is IILESGNVND…KKASQLVVTA (169 aa). The Peptidase M12B domain maps to 198–393; sequence RFVELVLVVD…QNPECIVNEP (196 aa). Ca(2+) contacts are provided by E201 and D285. Intrachain disulfides connect C308-C388, C348-C372, and C350-C355. H333 is a Zn(2+) binding site. Residue E334 is part of the active site. Positions 337 and 343 each coordinate Zn(2+). An N-linked (GlcNAc...) asparagine glycan is attached at N371. C388, N391, V403, N406, L408, E410, E413, and D416 together coordinate Ca(2+). Positions 401–487 constitute a Disintegrin domain; that stretch reads PPVCGNELLE…ECPADVFHKN (87 aa). 14 disulfides stabilise this stretch: C404/C433, C415/C428, C417/C423, C427/C450, C441/C447, C446/C472, C459/C479, C466/C498, C491/C503, C510/C560, C525/C571, C538/C548, C555/C597, and C591/C602. A D/ECD-tripeptide motif is present at residues 465–467; sequence ECD. The Ca(2+) site is built by D467, P468, E470, D482, and V483.

Belongs to the venom metalloproteinase (M12B) family. P-III subfamily. P-IIIa sub-subfamily. As to quaternary structure, monomer. It depends on Zn(2+) as a cofactor. Expressed by the venom gland.

The protein resides in the secreted. Functionally, this protein is a zinc metalloprotease from snake venom that possesses hemorrhagic activity. The polypeptide is Zinc metalloproteinase-disintegrin-like (Crotalus durissus durissus (Central American rattlesnake)).